A 293-amino-acid polypeptide reads, in one-letter code: Ribosomal protein L11 methyltransferase (293 aa).

Threonine 145, glycine 166, aspartate 188, and asparagine 230 together coordinate S-adenosyl-L-methionine.

This sequence belongs to the methyltransferase superfamily. PrmA family.

It localises to the cytoplasm. It carries out the reaction L-lysyl-[protein] + 3 S-adenosyl-L-methionine = N(6),N(6),N(6)-trimethyl-L-lysyl-[protein] + 3 S-adenosyl-L-homocysteine + 3 H(+). Its function is as follows. Methylates ribosomal protein L11. This Actinobacillus pleuropneumoniae serotype 7 (strain AP76) protein is Ribosomal protein L11 methyltransferase.